A 99-amino-acid polypeptide reads, in one-letter code: MVDVETVETKYKIILDTQSNYVLMEGRLKVEVRIKGKPIIYEVQEVRNMGYLIDITELDIADTKQRIDSKLCERRYKYVNSLKNLEKFINFVGAEIEVK.

This is an uncharacterized protein from Saccharolobus islandicus (Sulfolobus islandicus).